A 382-amino-acid chain; its full sequence is Lipid-A-disaccharide synthase (382 aa).

Belongs to the LpxB family.

It carries out the reaction 2-N,3-O-bis[(3R)-3-hydroxytetradecanoyl]-alpha-D-glucosaminyl 1-phosphate + UDP-2-N,3-O-bis[(3R)-3-hydroxytetradecanoyl]-alpha-D-glucosamine = lipid A disaccharide (E. coli) + UDP + H(+). It catalyses the reaction a lipid X + a UDP-2-N,3-O-bis[(3R)-3-hydroxyacyl]-alpha-D-glucosamine = a lipid A disaccharide + UDP + H(+). It functions in the pathway glycolipid biosynthesis; lipid IV(A) biosynthesis; lipid IV(A) from (3R)-3-hydroxytetradecanoyl-[acyl-carrier-protein] and UDP-N-acetyl-alpha-D-glucosamine: step 5/6. Condensation of UDP-2,3-diacylglucosamine and 2,3-diacylglucosamine-1-phosphate to form lipid A disaccharide, a precursor of lipid A, a phosphorylated glycolipid that anchors the lipopolysaccharide to the outer membrane of the cell. The chain is Lipid-A-disaccharide synthase from Escherichia coli (strain 55989 / EAEC).